The chain runs to 55 residues: ATP synthase protein 8 (55 aa).

The helical transmembrane segment at 4–24 (LDPAPWFSMLTVSWLIIFLLI) threads the bilayer.

It belongs to the ATPase protein 8 family. In terms of assembly, F-type ATPases have 2 components, CF(1) - the catalytic core - and CF(0) - the membrane proton channel.

It localises to the mitochondrion membrane. In terms of biological role, mitochondrial membrane ATP synthase (F(1)F(0) ATP synthase or Complex V) produces ATP from ADP in the presence of a proton gradient across the membrane which is generated by electron transport complexes of the respiratory chain. F-type ATPases consist of two structural domains, F(1) - containing the extramembraneous catalytic core and F(0) - containing the membrane proton channel, linked together by a central stalk and a peripheral stalk. During catalysis, ATP synthesis in the catalytic domain of F(1) is coupled via a rotary mechanism of the central stalk subunits to proton translocation. Part of the complex F(0) domain. Minor subunit located with subunit a in the membrane. The chain is ATP synthase protein 8 (MT-ATP8) from Petromyzon marinus (Sea lamprey).